The following is a 1226-amino-acid chain: Methionine synthase (1226 aa).

Residues 6–326 (RAQIEAQLKQ…EHIRHMAMAV (321 aa)) form the Hcy-binding domain. Positions 248, 311, and 312 each coordinate Zn(2+). One can recognise a Pterin-binding domain in the interval 357–618 (FVNVGERTNV…VPEKLREAVE (262 aa)). The B12-binding N-terminal domain maps to 651-745 (SALEWRTWSV…FINASKQVGS (95 aa)). Methylcob(III)alamin-binding positions include E695, 757-761 (GDVHD), H760, S805, T809, and A861. The 136-residue stretch at 747–882 (NGKILLATVK…SDELRPAFVE (136 aa)) folds into the B12-binding domain. One can recognise an AdoMet activation domain in the interval 898 to 1226 (KKPRTKPVTL…EKWLGPNING (329 aa)). S-adenosyl-L-methionine is bound by residues D948, R1136, and 1191 to 1192 (YF).

This sequence belongs to the vitamin-B12 dependent methionine synthase family. It depends on methylcob(III)alamin as a cofactor. Requires Zn(2+) as cofactor.

The enzyme catalyses (6S)-5-methyl-5,6,7,8-tetrahydrofolate + L-homocysteine = (6S)-5,6,7,8-tetrahydrofolate + L-methionine. The protein operates within amino-acid biosynthesis; L-methionine biosynthesis via de novo pathway; L-methionine from L-homocysteine (MetH route): step 1/1. In terms of biological role, catalyzes the transfer of a methyl group from methyl-cobalamin to homocysteine, yielding enzyme-bound cob(I)alamin and methionine. Subsequently, remethylates the cofactor using methyltetrahydrofolate. The protein is Methionine synthase (metH) of Vibrio vulnificus (strain YJ016).